The following is a 548-amino-acid chain: uncharacterized protein (548 aa).

The region spanning 8 to 200 (KLFADMIIQG…LLCVYEGFLK (193 aa)) is the DhaL domain.

This is an uncharacterized protein from Staphylococcus aureus (strain NCTC 8325 / PS 47).